Reading from the N-terminus, the 475-residue chain is Aspartyl/glutamyl-tRNA(Asn/Gln) amidotransferase subunit B (475 aa).

This sequence belongs to the GatB/GatE family. GatB subfamily. As to quaternary structure, heterotrimer of A, B and C subunits.

The enzyme catalyses L-glutamyl-tRNA(Gln) + L-glutamine + ATP + H2O = L-glutaminyl-tRNA(Gln) + L-glutamate + ADP + phosphate + H(+). It catalyses the reaction L-aspartyl-tRNA(Asn) + L-glutamine + ATP + H2O = L-asparaginyl-tRNA(Asn) + L-glutamate + ADP + phosphate + 2 H(+). Functionally, allows the formation of correctly charged Asn-tRNA(Asn) or Gln-tRNA(Gln) through the transamidation of misacylated Asp-tRNA(Asn) or Glu-tRNA(Gln) in organisms which lack either or both of asparaginyl-tRNA or glutaminyl-tRNA synthetases. The reaction takes place in the presence of glutamine and ATP through an activated phospho-Asp-tRNA(Asn) or phospho-Glu-tRNA(Gln). This chain is Aspartyl/glutamyl-tRNA(Asn/Gln) amidotransferase subunit B, found in Chlorobaculum tepidum (strain ATCC 49652 / DSM 12025 / NBRC 103806 / TLS) (Chlorobium tepidum).